The sequence spans 182 residues: Translation initiation factor IF-3 (182 aa).

The protein belongs to the IF-3 family. In terms of assembly, monomer.

Its subcellular location is the cytoplasm. Functionally, IF-3 binds to the 30S ribosomal subunit and shifts the equilibrium between 70S ribosomes and their 50S and 30S subunits in favor of the free subunits, thus enhancing the availability of 30S subunits on which protein synthesis initiation begins. In Endomicrobium trichonymphae, this protein is Translation initiation factor IF-3.